The sequence spans 80 residues: Photosystem II extrinsic protein V (80 aa).

A heme-binding site is contributed by Met-47.

It belongs to the cytochrome c family. PsbV subfamily. In terms of assembly, PSII is composed of 1 copy each of membrane proteins PsbA, PsbB, PsbC, PsbD, PsbE, PsbF, PsbH, PsbI, PsbJ, PsbK, PsbL, PsbM, PsbT, PsbY, PsbZ, Psb30/Ycf12, at least 3 peripheral proteins of the oxygen-evolving complex and a large number of cofactors. It forms dimeric complexes. Requires heme as cofactor.

It is found in the plastid. The protein localises to the chloroplast thylakoid membrane. Functionally, one of the extrinsic, lumenal subunits of photosystem II (PSII). PSII is a light-driven water plastoquinone oxidoreductase, using light energy to abstract electrons from H(2)O, generating a proton gradient subsequently used for ATP formation. The extrinsic proteins stabilize the structure of photosystem II oxygen-evolving complex (OEC), the ion environment of oxygen evolution and protect the OEC against heat-induced inactivation. In Thalassiosira weissflogii (Marine diatom), this protein is Photosystem II extrinsic protein V.